The chain runs to 328 residues: tRNA uridine(34) hydroxylase (328 aa).

Positions 130-224 (LDEDTVVLDT…YGKDPEVQGE (95 aa)) constitute a Rhodanese domain. The active-site Cysteine persulfide intermediate is the Cys184.

Belongs to the TrhO family.

The catalysed reaction is uridine(34) in tRNA + AH2 + O2 = 5-hydroxyuridine(34) in tRNA + A + H2O. Functionally, catalyzes oxygen-dependent 5-hydroxyuridine (ho5U) modification at position 34 in tRNAs. In Streptococcus agalactiae serotype Ia (strain ATCC 27591 / A909 / CDC SS700), this protein is tRNA uridine(34) hydroxylase.